The chain runs to 159 residues: Heat shock protein beta-9 (159 aa).

The region spanning 36 to 147 is the sHSP domain; it reads LLRDSPAAQE…EAQTGPSPRL (112 aa).

The protein belongs to the small heat shock protein (HSP20) family. Testis specific.

It localises to the cytoplasm. Its subcellular location is the nucleus. The protein is Heat shock protein beta-9 (HSPB9) of Homo sapiens (Human).